The primary structure comprises 209 residues: Ribonuclease HII (209 aa).

The region spanning 19 to 209 (CTIVGVDEVG…ASGITKLYNK (191 aa)) is the RNase H type-2 domain. The a divalent metal cation site is built by aspartate 25, glutamate 26, and aspartate 118.

This sequence belongs to the RNase HII family. Mn(2+) is required as a cofactor. It depends on Mg(2+) as a cofactor.

The protein resides in the cytoplasm. It carries out the reaction Endonucleolytic cleavage to 5'-phosphomonoester.. Functionally, endonuclease that specifically degrades the RNA of RNA-DNA hybrids. The chain is Ribonuclease HII from Ehrlichia chaffeensis (strain ATCC CRL-10679 / Arkansas).